The following is a 511-amino-acid chain: Maturase K (511 aa).

Belongs to the intron maturase 2 family. MatK subfamily.

The protein resides in the plastid. Its subcellular location is the chloroplast. Usually encoded in the trnK tRNA gene intron. Probably assists in splicing its own and other chloroplast group II introns. This Triticum aestivum (Wheat) protein is Maturase K.